Here is a 1783-residue protein sequence, read N- to C-terminus: Chitin synthase A (1783 aa).

Asparagine 159, asparagine 637, asparagine 652, asparagine 664, and asparagine 669 each carry an N-linked (GlcNAc...) asparagine glycan. 2 helical membrane-spanning segments follow: residues 745 to 765 and 781 to 801; these read IWVA…LSFV and LTLV…IVAF. 2 N-linked (GlcNAc...) asparagine glycosylation sites follow: asparagine 1014 and asparagine 1018. The helical transmembrane segment at 1051 to 1071 threads the bilayer; the sequence is IMLAMTIILCSVILVKFLAAL. N-linked (GlcNAc...) asparagine glycosylation is present at asparagine 1416. The next 3 helical transmembrane spans lie at 1441 to 1461, 1474 to 1494, and 1502 to 1522; these read FVVF…IYLG, FPII…LIFI, and IGWM…LPIY. 2 N-linked (GlcNAc...) asparagine glycosylation sites follow: asparagine 1529 and asparagine 1617. A disordered region spans residues 1659 to 1724; the sequence is THDINRGQTP…SFDFQRGNMQ (66 aa). A compositionally biased stretch (polar residues) spans 1664–1688; it reads RGQTPFQDFPSSRPSVSNLRGQANP. Asparagine 1695 carries an N-linked (GlcNAc...) asparagine glycan. The 57-residue stretch at 1725–1781 folds into the DEK-C domain; that stretch reads GPDDSMIIEAIQGVLREVDLDTVTKKQVRALVEQRLQTGLVGERRTFMDRQIDNELA.

It belongs to the chitin synthase family. Class V subfamily.

It is found in the cell membrane. It carries out the reaction [(1-&gt;4)-N-acetyl-beta-D-glucosaminyl](n) + UDP-N-acetyl-alpha-D-glucosamine = [(1-&gt;4)-N-acetyl-beta-D-glucosaminyl](n+1) + UDP + H(+). Polymerizes chitin, a structural polymer of the cell wall and septum, by transferring the sugar moiety of UDP-GlcNAc to the non-reducing end of the growing chitin polymer. Responsible for about 29% of the chitin in conidial walls, is essential for conidial wall strength in media with high water potential and contributes to strength of hyphal tips. This is Chitin synthase A from Colletotrichum graminicola (Maize anthracnose fungus).